A 464-amino-acid polypeptide reads, in one-letter code: tRNA modification GTPase MnmE (464 aa).

(6S)-5-formyl-5,6,7,8-tetrahydrofolate contacts are provided by Arg25, Glu87, and Lys130. In terms of domain architecture, TrmE-type G spans 226 to 386; the sequence is GLSVVLAGQP…LREELLRIAG (161 aa). Asn236 is a binding site for K(+). GTP contacts are provided by residues 236–241, 255–261, and 280–283; these read NVGKSS, TPIAGTT, and DTAG. Ser240 contributes to the Mg(2+) binding site. The K(+) site is built by Thr255, Ile257, and Thr260. Position 261 (Thr261) interacts with Mg(2+). Lys464 provides a ligand contact to (6S)-5-formyl-5,6,7,8-tetrahydrofolate.

This sequence belongs to the TRAFAC class TrmE-Era-EngA-EngB-Septin-like GTPase superfamily. TrmE GTPase family. As to quaternary structure, homodimer. Heterotetramer of two MnmE and two MnmG subunits. It depends on K(+) as a cofactor.

The protein localises to the cytoplasm. Functionally, exhibits a very high intrinsic GTPase hydrolysis rate. Involved in the addition of a carboxymethylaminomethyl (cmnm) group at the wobble position (U34) of certain tRNAs, forming tRNA-cmnm(5)s(2)U34. The protein is tRNA modification GTPase MnmE of Paraburkholderia xenovorans (strain LB400).